The sequence spans 1084 residues: MEGILDFSNDLDIALLDQVVSTFYQGSGVQQKQAQEILTKFQDNPDAWQKADQILQFSTNPQSKFIALSILDKLITRKWKLLPNDHRIGIRNFVVGMIISMCQDDEVFKTQKNLINKSDLTLVQILKQEWPQNWPEFIPELIGSSSSSVNVCENNMIVLKLLSEEVFDFSAEQMTQAKALHLKNSMSKEFEQIFKLCFQVLEQGSSSSLIVATLESLLRYLHWIPYRYIYETNILELLSTKFMTSPDTRAITLKCLTEVSNLKIPQDNDLIKRQTVLFFQNTLQQIATSVMPVTADLKATYANANGNDQSFLQDLAMFLTTYLARNRALLESDESLRELLLNAHQYLIQLSKIEERELFKTTLDYWHNLVADLFYEVQRLPATEMSPLIQLSVGSQAISTGSGALNPEYMKRFPLKKHIYEEICSQLRLVIIENMVRPEEVLVVENDEGEIVREFVKESDTIQLYKSEREVLVYLTHLNVIDTEEIMISKLARQIDGSEWSWHNINTLSWAIGSISGTMSEDTEKRFVVTVIKDLLDLTVKKRGKDNKAVVASDIMYVVGQYPRFLKAHWNFLRTVILKLFEFMHETHEGVQDMACDTFIKIVQKCKYHFVIQQPRESEPFIQTIIRDIQKTTADLQPQQVHTFYKACGIIISEERSVAERNRLLSDLMQLPNMAWDTIVEQSTANPTLLLDSETVKIIANIIKTNVAVCTSMGADFYPQLGHIYYNMLQLYRAVSSMISAQVAAEGLIATKTPKVRGLRTIKKEILKLVETYISKARNLDDVVKVLVEPLLNAVLEDYMNNVPDARDAEVLNCMTTVVEKVGHMIPQGVILILQSVFECTLDMINKDFTEYPEHRVEFYKLLKVINEKSFAAFLELPPAAFKLFVDAICWAFKHNNRDVEVNGLQIALDLVKNIERMGNVPFANEFHKNYFFIFVSETFFVLTDSDHKSGFSKQALLLMKLISLVYDNKISVPLYQEAEVPQGTSNQVYLSQYLANMLSNAFPHLTSEQIASFLSALTKQYKDLVVFKGTLRDFLVQIKEVGGDPTDYLFAEDKENALMEQNRLEREKAAKIGGLLKPSELDD.

Residues 34-100 (AQEILTKFQD…RNFVVGMIIS (67 aa)) enclose the Importin N-terminal domain. Ser1080 carries the post-translational modification Phosphoserine.

The protein belongs to the exportin family. As to quaternary structure, interacts with GSP1/GSP2, polyadenylate-binding protein PAB1 and PRP40.

The protein resides in the nucleus. It is found in the cytoplasm. The protein localises to the perinuclear region. Its function is as follows. Receptor for the leucine-rich nuclear export signal (NES). This is Exportin-1 (CRM1) from Saccharomyces cerevisiae (strain ATCC 204508 / S288c) (Baker's yeast).